Consider the following 45-residue polypeptide: MKAKSHLSNKKRKRASGFLARMKTKAGRKILARRRAKGRKRIAIK.

Composition is skewed to basic residues over residues 1–15 (MKAK…RKRA) and 22–45 (MKTK…IAIK). Positions 1–45 (MKAKSHLSNKKRKRASGFLARMKTKAGRKILARRRAKGRKRIAIK) are disordered.

Belongs to the bacterial ribosomal protein bL34 family.

The protein is Large ribosomal subunit protein bL34 of Sulfurihydrogenibium sp. (strain YO3AOP1).